The following is a 349-amino-acid chain: Phenylalanine--tRNA ligase alpha subunit (349 aa).

E258 provides a ligand contact to Mg(2+).

Belongs to the class-II aminoacyl-tRNA synthetase family. Phe-tRNA synthetase alpha subunit type 1 subfamily. Tetramer of two alpha and two beta subunits. Mg(2+) is required as a cofactor.

It is found in the cytoplasm. The catalysed reaction is tRNA(Phe) + L-phenylalanine + ATP = L-phenylalanyl-tRNA(Phe) + AMP + diphosphate + H(+). The chain is Phenylalanine--tRNA ligase alpha subunit from Rickettsia bellii (strain RML369-C).